The following is a 1072-amino-acid chain: DNA-directed RNA polymerase subunit beta (1072 aa).

The protein belongs to the RNA polymerase beta chain family. In terms of assembly, in plastids the minimal PEP RNA polymerase catalytic core is composed of four subunits: alpha, beta, beta', and beta''. When a (nuclear-encoded) sigma factor is associated with the core the holoenzyme is formed, which can initiate transcription.

It is found in the plastid. It localises to the chloroplast. The enzyme catalyses RNA(n) + a ribonucleoside 5'-triphosphate = RNA(n+1) + diphosphate. Its function is as follows. DNA-dependent RNA polymerase catalyzes the transcription of DNA into RNA using the four ribonucleoside triphosphates as substrates. The polypeptide is DNA-directed RNA polymerase subunit beta (Arabidopsis thaliana (Mouse-ear cress)).